Reading from the N-terminus, the 860-residue chain is Leucine--tRNA ligase (860 aa).

Residues 42-52 carry the 'HIGH' region motif; the sequence is PYPSGRLHMGH. The 'KMSKS' region signature appears at 619–623; it reads KMSKS. K622 serves as a coordination point for ATP.

Belongs to the class-I aminoacyl-tRNA synthetase family.

The protein resides in the cytoplasm. It catalyses the reaction tRNA(Leu) + L-leucine + ATP = L-leucyl-tRNA(Leu) + AMP + diphosphate. This is Leucine--tRNA ligase from Edwardsiella ictaluri (strain 93-146).